The primary structure comprises 323 residues: Galectin-4 (323 aa).

Galectin domains follow at residues 19 to 150 (YYKP…INFI) and 194 to 323 (YKTR…YVQI). Residue 256–262 (WGAEERK) participates in a beta-D-galactoside binding.

Monomer.

Galectin that binds lactose and a related range of sugars. May be involved in the assembly of adherens junctions. The chain is Galectin-4 (LGALS4) from Sus scrofa (Pig).